The primary structure comprises 117 residues: Prefoldin subunit beta (117 aa).

This sequence belongs to the prefoldin subunit beta family. In terms of assembly, heterohexamer of two alpha and four beta subunits.

It localises to the cytoplasm. In terms of biological role, molecular chaperone capable of stabilizing a range of proteins. Seems to fulfill an ATP-independent, HSP70-like function in archaeal de novo protein folding. The chain is Prefoldin subunit beta from Thermococcus kodakarensis (strain ATCC BAA-918 / JCM 12380 / KOD1) (Pyrococcus kodakaraensis (strain KOD1)).